A 932-amino-acid chain; its full sequence is Lon protease homolog 2, peroxisomal (932 aa).

The region spanning 11–259 (LALVPLPKGS…RVVELLARQV (249 aa)) is the Lon N-terminal domain. The disordered stretch occupies residues 304 to 340 (TGLTPPGAAGGRNNEDEKETNEVDELQKRLQEAELSP). Residues 328–340 (ELQKRLQEAELSP) are compositionally biased toward basic and acidic residues. 486 to 493 (GPPGTGKT) is a binding site for ATP. Positions 729-916 (HGRPGVVTGL…WEAIRQVWPG (188 aa)) constitute a Lon proteolytic domain. Catalysis depends on residues Ser-822 and Lys-865. The Microbody targeting signal motif lies at 930 to 932 (SRL).

The protein belongs to the peptidase S16 family.

Its subcellular location is the peroxisome matrix. It catalyses the reaction Hydrolysis of proteins in presence of ATP.. Its function is as follows. ATP-dependent serine protease that mediates the selective degradation of misfolded and unassembled polypeptides in the peroxisomal matrix. Necessary for type 2 peroxisome targeting signal (PTS2)-containing protein processing and facilitates peroxisome matrix protein import. The polypeptide is Lon protease homolog 2, peroxisomal (Aspergillus fumigatus (strain ATCC MYA-4609 / CBS 101355 / FGSC A1100 / Af293) (Neosartorya fumigata)).